Reading from the N-terminus, the 285-residue chain is uncharacterized protein (285 aa).

The signal sequence occupies residues 1-25; sequence MVKKWLIQFAVMLSVLSTFTYSASA.

This is an uncharacterized protein from Bacillus subtilis (strain 168).